A 471-amino-acid chain; its full sequence is PTS system mannitol-specific EIICB component (471 aa).

Topologically, residues 1–29 are cytoplasmic; the sequence is MTHTSENQAGFRVKIQRFGSYLSGMIMPN. The PTS EIIC type-2 domain occupies 18–342; it reads FGSYLSGMIM…FFVASIFLKS (325 aa). The helical transmembrane segment at 30-51 threads the bilayer; the sequence is IGAFIAWGIITALFIPTGWLPN. Residues 52-55 are Extracellular-facing; sequence ETFA. The chain crosses the membrane as a helical span at residues 56 to 76; sequence KLVGPMITYLLPLLIGYTGGK. Topologically, residues 77-139 are cytoplasmic; that stretch reads MIYDVRGGVV…QGFEMLVNNF (63 aa). Residues 140 to 161 traverse the membrane as a helical segment; the sequence is SAGIIGGLLTLAAFKGVGPVVS. Residues 162–170 lie on the Extracellular side of the membrane; the sequence is AISKTLAAG. Residues 171-191 traverse the membrane as a helical segment; it reads VEKIVDLHLLPLANIFIEPGK. Residues 192–278 lie on the Cytoplasmic side of the membrane; the sequence is VLFLNNAINH…VLMRPILILA (87 aa). The chain crosses the membrane as a helical span at residues 279–298; sequence AIAGGVSGVLTFTIFDAGLV. The Extracellular portion of the chain corresponds to 299–318; that stretch reads AVPSPGSIFALLAMTPKGNY. A helical membrane pass occupies residues 319–340; sequence LGVLAGVLVATAVSFFVASIFL. Residues 341 to 471 lie on the Cytoplasmic side of the membrane; sequence KSAKNNEEDI…YDELIEMLKK (131 aa). Residues 383–471 enclose the PTS EIIB type-2 domain; the sequence is KKIVFACDAG…YDELIEMLKK (89 aa). Catalysis depends on C389, which acts as the Phosphocysteine intermediate; for EIIB activity. C389 carries the phosphocysteine; by EIIA modification.

As to quaternary structure, homodimer.

It is found in the cell membrane. The enzyme catalyses D-mannitol(out) + N(pros)-phospho-L-histidyl-[protein] = D-mannitol 1-phosphate(in) + L-histidyl-[protein]. The phosphoenolpyruvate-dependent sugar phosphotransferase system (sugar PTS), a major carbohydrate active transport system, catalyzes the phosphorylation of incoming sugar substrates concomitantly with their translocation across the cell membrane. The enzyme II CmtAB PTS system is involved in D-mannitol transport. This Geobacillus stearothermophilus (Bacillus stearothermophilus) protein is PTS system mannitol-specific EIICB component.